The following is an 822-amino-acid chain: Pentatricopeptide repeat-containing protein At2g41720 (822 aa).

A disordered region spans residues 1–28 (MATVTNFKLVTPPESSRADKPGATKASD). PPR repeat units lie at residues 106–136 (ARKN…MKIQ), 142–176 (RNDI…SCKP), 177–211 (DAET…AIAP), 212–246 (SRST…GVGP), 247–281 (DLVT…KVRP), 282–316 (DTTT…RAEC), 319–353 (DVVT…GLKP), 354–388 (NIVS…GIIP), 389–423 (DVVS…RRKP), 424–458 (NVVT…GIKP), 459–493 (NVVS…GINL), 494–528 (NTAA…KVKA), 529–563 (DSVT…SIPL), 564–598 (TKEV…GCEP), 599–633 (DVIA…GIEP), 634–668 (DSIA…EIPF), 669–699 (TGAV…MDPY), 704–738 (SIGL…GVGI), and 739–773 (NLKT…GIQP).

It belongs to the PPR family. P subfamily.

In Arabidopsis thaliana (Mouse-ear cress), this protein is Pentatricopeptide repeat-containing protein At2g41720 (EMB2654).